The sequence spans 133 residues: MKYLILSLVANLLVFGVLSAIGLNINILAAMMIVLVIPIMISGILFFKTNIDKTYIFFNIIFIDFYYYIYNVHLMTLPKFNNYIKAEMMELEDIDVLITSKDFGFDEILFYTLYLLLILIVLYYLKKQVKHKI.

The next 4 membrane-spanning stretches (helical) occupy residues 3–23 (YLIL…AIGL), 27–47 (ILAA…ILFF), 55–75 (YIFF…VHLM), and 103–123 (FGFD…IVLY).

The protein resides in the cell membrane. Functionally, accessory element involved in the expression of sarA and several virulence factors. Modulates SarA production and/or function in a strain-dependent manner. Affects the transcription of the accessory gene regulator (agr) and genes encoding virulence factors including alpha toxin (hla) and protein A (spa). This is Protein msa (msa) from Staphylococcus aureus (strain USA300).